The chain runs to 166 residues: Transmembrane protein 190 (166 aa).

The N-terminal stretch at 1–21 (MVGSGISALGLLLLMQGSVDA) is a signal peptide. Residues 22 to 81 (NGIQGFFYPWSCEGDVWDRESCGGQAAIENPNLCLRLRCCYRDGVCYHQRPDENMRRKHM) are Extracellular-facing. The region spanning 31 to 71 (WSCEGDVWDRESCGGQAAIENPNLCLRLRCCYRDGVCYHQR) is the P-type domain. 3 cysteine pairs are disulfide-bonded: Cys-33-Cys-61, Cys-43-Cys-60, and Cys-55-Cys-67. Residues 82–102 (WALGWTCGSLLFLITSICLFW) form a helical membrane-spanning segment. The Cytoplasmic segment spans residues 103-166 (WARRQDMLHL…VSGEDTGGEE (64 aa)). Positions 130-166 (LSKDRRSANKSTTVLQSPGGEVETAAAVSGEDTGGEE) are disordered.

In terms of tissue distribution, detected in testis and in a mixture of spermatogenic cells at various stages (testicular germ cells). Not detected in heart, brain, spleen, lung, liver, skeletal muscle and kidney.

Its subcellular location is the membrane. This is Transmembrane protein 190 (Tmem190) from Mus musculus (Mouse).